The primary structure comprises 434 residues: Lecithin-cholesterol acyltransferase-like 1 (434 aa).

Catalysis depends on S191, which acts as the Acyl-ester intermediate. Residues D354 and H386 each act as charge relay system in the active site.

The protein belongs to the AB hydrolase superfamily. Lipase family.

In Oryza sativa subsp. japonica (Rice), this protein is Lecithin-cholesterol acyltransferase-like 1.